A 137-amino-acid chain; its full sequence is Oleosin Ara h 11.0101 (137 aa).

A2 is modified (N-acetylalanine; alternate). The next 2 membrane-spanning stretches (helical) occupy residues A27–I47 and L55–L75.

It belongs to the oleosin family. Expressed in seeds (at protein level).

It is found in the lipid droplet. The protein localises to the membrane. May have a structural role to stabilize the lipid body during desiccation of the seed by preventing coalescence of the oil. Probably interacts with both lipid and phospholipid moieties of lipid bodies. May also provide recognition signals for specific lipase anchorage in lipolysis during seedling growth. This Arachis hypogaea (Peanut) protein is Oleosin Ara h 11.0101.